A 126-amino-acid polypeptide reads, in one-letter code: Large ribosomal subunit protein eL18 (126 aa).

Belongs to the eukaryotic ribosomal protein eL18 family.

The sequence is that of Large ribosomal subunit protein eL18 from Methanosarcina acetivorans (strain ATCC 35395 / DSM 2834 / JCM 12185 / C2A).